The sequence spans 259 residues: Ribosomal RNA small subunit methyltransferase A (259 aa).

Residues N13, L15, G40, E61, D85, and N103 each contribute to the S-adenosyl-L-methionine site.

Belongs to the class I-like SAM-binding methyltransferase superfamily. rRNA adenine N(6)-methyltransferase family. RsmA subfamily.

Its subcellular location is the cytoplasm. The enzyme catalyses adenosine(1518)/adenosine(1519) in 16S rRNA + 4 S-adenosyl-L-methionine = N(6)-dimethyladenosine(1518)/N(6)-dimethyladenosine(1519) in 16S rRNA + 4 S-adenosyl-L-homocysteine + 4 H(+). Functionally, specifically dimethylates two adjacent adenosines (A1518 and A1519) in the loop of a conserved hairpin near the 3'-end of 16S rRNA in the 30S particle. May play a critical role in biogenesis of 30S subunits. In Neisseria gonorrhoeae (strain NCCP11945), this protein is Ribosomal RNA small subunit methyltransferase A.